The chain runs to 92 residues: Small ribosomal subunit protein uS19 (92 aa).

This sequence belongs to the universal ribosomal protein uS19 family.

In terms of biological role, protein S19 forms a complex with S13 that binds strongly to the 16S ribosomal RNA. The protein is Small ribosomal subunit protein uS19 of Polaromonas naphthalenivorans (strain CJ2).